A 245-amino-acid chain; its full sequence is Adenosylcobinamide-GDP ribazoletransferase (245 aa).

The next 5 helical transmembrane spans lie at 31-51 (FGRA…VLYA), 61-81 (PLLQ…ALHL), 113-133 (VAVV…AALL), 138-158 (AGLL…LFLT), and 192-212 (LAFG…FAWL).

The protein belongs to the CobS family. It depends on Mg(2+) as a cofactor.

Its subcellular location is the cell inner membrane. It carries out the reaction alpha-ribazole + adenosylcob(III)inamide-GDP = adenosylcob(III)alamin + GMP + H(+). The enzyme catalyses alpha-ribazole 5'-phosphate + adenosylcob(III)inamide-GDP = adenosylcob(III)alamin 5'-phosphate + GMP + H(+). It functions in the pathway cofactor biosynthesis; adenosylcobalamin biosynthesis; adenosylcobalamin from cob(II)yrinate a,c-diamide: step 7/7. Functionally, joins adenosylcobinamide-GDP and alpha-ribazole to generate adenosylcobalamin (Ado-cobalamin). Also synthesizes adenosylcobalamin 5'-phosphate from adenosylcobinamide-GDP and alpha-ribazole 5'-phosphate. This is Adenosylcobinamide-GDP ribazoletransferase from Pseudomonas aeruginosa (strain UCBPP-PA14).